A 762-amino-acid chain; its full sequence is 5-methyltetrahydropteroyltriglutamate--homocysteine methyltransferase (762 aa).

5-methyltetrahydropteroyltri-L-glutamate-binding positions include 17 to 20 (REWK) and lysine 111. Residues 435–437 (IGS) and glutamate 488 each bind L-homocysteine. L-methionine-binding positions include 435-437 (IGS) and glutamate 488. 5-methyltetrahydropteroyltri-L-glutamate-binding positions include 519 to 520 (RC) and tryptophan 565. L-homocysteine is bound at residue aspartate 603. Aspartate 603 serves as a coordination point for L-methionine. Glutamate 609 serves as a coordination point for 5-methyltetrahydropteroyltri-L-glutamate. Zn(2+) contacts are provided by histidine 645, cysteine 647, and glutamate 669. The active-site Proton donor is the histidine 698. Cysteine 730 lines the Zn(2+) pocket.

Belongs to the vitamin-B12 independent methionine synthase family. The cofactor is Zn(2+).

It catalyses the reaction 5-methyltetrahydropteroyltri-L-glutamate + L-homocysteine = tetrahydropteroyltri-L-glutamate + L-methionine. The protein operates within amino-acid biosynthesis; L-methionine biosynthesis via de novo pathway; L-methionine from L-homocysteine (MetE route): step 1/1. Functionally, catalyzes the transfer of a methyl group from 5-methyltetrahydrofolate to homocysteine resulting in methionine formation. In Bacillus cereus (strain ATCC 14579 / DSM 31 / CCUG 7414 / JCM 2152 / NBRC 15305 / NCIMB 9373 / NCTC 2599 / NRRL B-3711), this protein is 5-methyltetrahydropteroyltriglutamate--homocysteine methyltransferase.